The following is a 123-amino-acid chain: Small ribosomal subunit protein uS13 (123 aa).

The tract at residues 97 to 123 (PVRGQRTKTNARTRKGPRKTVGVRRKK) is disordered.

Belongs to the universal ribosomal protein uS13 family. In terms of assembly, part of the 30S ribosomal subunit. Forms a loose heterodimer with protein S19. Forms two bridges to the 50S subunit in the 70S ribosome.

In terms of biological role, located at the top of the head of the 30S subunit, it contacts several helices of the 16S rRNA. In the 70S ribosome it contacts the 23S rRNA (bridge B1a) and protein L5 of the 50S subunit (bridge B1b), connecting the 2 subunits; these bridges are implicated in subunit movement. Contacts the tRNAs in the A and P-sites. The protein is Small ribosomal subunit protein uS13 of Pelotomaculum thermopropionicum (strain DSM 13744 / JCM 10971 / SI).